The chain runs to 1410 residues: DNA-directed RNA polymerase subunit beta' (1410 aa).

Zn(2+) contacts are provided by C70, C72, C85, and C88. Residues D460, D462, and D464 each coordinate Mg(2+). Residues C814, C888, C895, and C898 each contribute to the Zn(2+) site.

This sequence belongs to the RNA polymerase beta' chain family. As to quaternary structure, the RNAP catalytic core consists of 2 alpha, 1 beta, 1 beta' and 1 omega subunit. When a sigma factor is associated with the core the holoenzyme is formed, which can initiate transcription. It depends on Mg(2+) as a cofactor. The cofactor is Zn(2+).

It catalyses the reaction RNA(n) + a ribonucleoside 5'-triphosphate = RNA(n+1) + diphosphate. Functionally, DNA-dependent RNA polymerase catalyzes the transcription of DNA into RNA using the four ribonucleoside triphosphates as substrates. This chain is DNA-directed RNA polymerase subunit beta', found in Buchnera aphidicola subsp. Cinara cedri (strain Cc).